A 381-amino-acid polypeptide reads, in one-letter code: NF-kappa-B inhibitor-like protein 1 (381 aa).

Residues 1–32 form a disordered region; it reads MSNPSPQAPEEEASTSVCRPQSSMASVSRRHR. Over residues 14 to 26 the composition is skewed to polar residues; the sequence is STSVCRPQSSMAS. 2 ANK repeats span residues 64–93 and 97–133; these read GQPP…DPAH and HGDT…IKNK. Disordered regions lie at residues 129–166, 186–242, and 257–294; these read GIKN…REWR, DDAS…QEEE, and LCES…RGSL. Position 150 is a phosphoserine (serine 150). Residues 150–159 are compositionally biased toward acidic residues; the sequence is SAEEEEDEEV. Basic and acidic residues-rich tracts occupy residues 204–228 and 257–270; these read RLAR…RPPR and LCES…EAQG.

In terms of assembly, interacts with CACTIN (via N-terminal domain); the interaction occurs in a pro-inflammatory-independent manner.

It is found in the nucleus. Its function is as follows. Involved in the regulation of innate immune response. Acts as negative regulator of Toll-like receptor and interferon-regulatory factor (IRF) signaling pathways. Contributes to the negative regulation of transcriptional activation of NF-kappa-B target genes in response to endogenous pro-inflammatory stimuli. This Rattus norvegicus (Rat) protein is NF-kappa-B inhibitor-like protein 1 (Nfkbil1).